The primary structure comprises 631 residues: Chaperone protein DnaK (631 aa).

Thr198 bears the Phosphothreonine; by autocatalysis mark. Residues 598 to 631 form a disordered region; it reads YSAQQGGEQPGAAKKDDVVDAEFTEVDDDKKKSA.

This sequence belongs to the heat shock protein 70 family.

In terms of biological role, acts as a chaperone. This chain is Chaperone protein DnaK, found in Azorhizobium caulinodans (strain ATCC 43989 / DSM 5975 / JCM 20966 / LMG 6465 / NBRC 14845 / NCIMB 13405 / ORS 571).